The following is a 244-amino-acid chain: Krueppel-like factor 9 (244 aa).

The interval 80–142 is disordered; the sequence is SVCSDSLESP…AKGKHASEKR (63 aa). Phosphoserine is present on Ser122. 3 C2H2-type zinc fingers span residues 143 to 167, 173 to 197, and 203 to 225; these read HKCP…YRVH, FPCT…YRTH, and FRCP…ARRH.

The protein belongs to the Sp1 C2H2-type zinc-finger protein family. As to quaternary structure, interacts with ZZEF1. Epidermis (at protein level).

The protein resides in the nucleus. In terms of biological role, transcription factor that binds to GC box promoter elements. Selectively activates mRNA synthesis from genes containing tandem repeats of GC boxes but represses genes with a single GC box. Acts as an epidermal circadian transcription factor regulating keratinocyte proliferation. This Homo sapiens (Human) protein is Krueppel-like factor 9 (KLF9).